We begin with the raw amino-acid sequence, 437 residues long: Adenylosuccinate synthetase (437 aa).

GTP is bound by residues 12–18 and 40–42; these read GDEGKGK and GHT. The active-site Proton acceptor is D13. Positions 13 and 40 each coordinate Mg(2+). IMP is bound by residues 13 to 16, 38 to 41, T128, R142, Q223, T238, and R302; these read DEGK and NAGH. H41 serves as the catalytic Proton donor. 298–304 serves as a coordination point for substrate; it reads TTTGRRR. Residues R304, 330–332, and 412–414 each bind GTP; these read KLD and SLG.

The protein belongs to the adenylosuccinate synthetase family. In terms of assembly, homodimer. The cofactor is Mg(2+).

Its subcellular location is the cytoplasm. It catalyses the reaction IMP + L-aspartate + GTP = N(6)-(1,2-dicarboxyethyl)-AMP + GDP + phosphate + 2 H(+). It participates in purine metabolism; AMP biosynthesis via de novo pathway; AMP from IMP: step 1/2. Plays an important role in the de novo pathway of purine nucleotide biosynthesis. Catalyzes the first committed step in the biosynthesis of AMP from IMP. The polypeptide is Adenylosuccinate synthetase (Parasynechococcus marenigrum (strain WH8102)).